A 365-amino-acid polypeptide reads, in one-letter code: Peptide chain release factor 2 (365 aa).

Gln-252 is modified (N5-methylglutamine).

It belongs to the prokaryotic/mitochondrial release factor family. Methylated by PrmC. Methylation increases the termination efficiency of RF2.

The protein localises to the cytoplasm. Peptide chain release factor 2 directs the termination of translation in response to the peptide chain termination codons UGA and UAA. This is Peptide chain release factor 2 from Escherichia coli O8 (strain IAI1).